The following is a 356-amino-acid chain: sn-glycerol-3-phosphate import ATP-binding protein UgpC (356 aa).

The region spanning L4–I235 is the ABC transporter domain. An ATP-binding site is contributed by G37 to S44.

It belongs to the ABC transporter superfamily. sn-glycerol-3-phosphate importer (TC 3.A.1.1.3) family. As to quaternary structure, the complex is composed of two ATP-binding proteins (UgpC), two transmembrane proteins (UgpA and UgpE) and a solute-binding protein (UgpB).

Its subcellular location is the cell inner membrane. It carries out the reaction sn-glycerol 3-phosphate(out) + ATP + H2O = sn-glycerol 3-phosphate(in) + ADP + phosphate + H(+). In terms of biological role, part of the ABC transporter complex UgpBAEC involved in sn-glycerol-3-phosphate (G3P) import. Responsible for energy coupling to the transport system. The chain is sn-glycerol-3-phosphate import ATP-binding protein UgpC from Salmonella choleraesuis (strain SC-B67).